The primary structure comprises 80 residues: Omega-conotoxin-like 2/7 (80 aa).

Residues 1–22 form the signal peptide; it reads MKLTCMMIVAVMFLTASIFITA. Residues 23–51 constitute a propeptide that is removed on maturation; the sequence is DNSRNGIENLPRMRRHEMKKPKASKLNKR. 3 disulfide bridges follow: cysteine 53–cysteine 71, cysteine 60–cysteine 75, and cysteine 70–cysteine 79.

This sequence belongs to the conotoxin O1 superfamily. Expressed by the venom duct.

It is found in the secreted. Omega-conotoxins act at presynaptic membranes, they bind and block voltage-gated calcium channels (Cav). In Conus imperialis (Imperial cone), this protein is Omega-conotoxin-like 2/7.